Here is a 228-residue protein sequence, read N- to C-terminus: 2,3-bisphosphoglycerate-dependent phosphoglycerate mutase (228 aa).

Residues 8–15, 21–22, Arg60, 87–90, Lys98, 114–115, and 180–181 contribute to the substrate site; these read RHGQSAWN, TG, ERHY, RR, and GN. His9 (tele-phosphohistidine intermediate) is an active-site residue. Glu87 serves as the catalytic Proton donor/acceptor.

The protein belongs to the phosphoglycerate mutase family. BPG-dependent PGAM subfamily. Homodimer.

It carries out the reaction (2R)-2-phosphoglycerate = (2R)-3-phosphoglycerate. It functions in the pathway carbohydrate degradation; glycolysis; pyruvate from D-glyceraldehyde 3-phosphate: step 3/5. Catalyzes the interconversion of 2-phosphoglycerate and 3-phosphoglycerate. The sequence is that of 2,3-bisphosphoglycerate-dependent phosphoglycerate mutase from Rhizorhabdus wittichii (strain DSM 6014 / CCUG 31198 / JCM 15750 / NBRC 105917 / EY 4224 / RW1) (Sphingomonas wittichii).